The primary structure comprises 240 residues: Large ribosomal subunit protein uL2 (240 aa).

The disordered stretch occupies residues 200–240 (HPFGGGGRQHPGKPKSISRNAPPGRKVGDIASKRTGRGGNE).

The protein belongs to the universal ribosomal protein uL2 family. Part of the 50S ribosomal subunit. Forms a bridge to the 30S subunit in the 70S ribosome. Interacts weakly with protein L37Ae.

Its function is as follows. One of the primary rRNA binding proteins. Required for association of the 30S and 50S subunits to form the 70S ribosome, for tRNA binding and peptide bond formation. It has been suggested to have peptidyltransferase activity; this is somewhat controversial. Makes several contacts with the 16S rRNA in the 70S ribosome. The protein is Large ribosomal subunit protein uL2 (rpl2) of Haloarcula marismortui (strain ATCC 43049 / DSM 3752 / JCM 8966 / VKM B-1809) (Halobacterium marismortui).